The primary structure comprises 98 residues: NADH-ubiquinone oxidoreductase chain 4L (98 aa).

A run of 3 helical transmembrane segments spans residues 1–21, 29–49, and 61–81; these read MSLT…GLLM, SLLC…MTIL, and IILL…LVMV.

This sequence belongs to the complex I subunit 4L family. Core subunit of respiratory chain NADH dehydrogenase (Complex I) which is composed of 45 different subunits.

It localises to the mitochondrion inner membrane. It carries out the reaction a ubiquinone + NADH + 5 H(+)(in) = a ubiquinol + NAD(+) + 4 H(+)(out). Its function is as follows. Core subunit of the mitochondrial membrane respiratory chain NADH dehydrogenase (Complex I) which catalyzes electron transfer from NADH through the respiratory chain, using ubiquinone as an electron acceptor. Part of the enzyme membrane arm which is embedded in the lipid bilayer and involved in proton translocation. The polypeptide is NADH-ubiquinone oxidoreductase chain 4L (MT-ND4L) (Vampyressa brocki (Brock's yellow-eared bat)).